The following is a 556-amino-acid chain: Cytochrome P450 4g1 (556 aa).

Heme is bound by residues Glu356 and Cys497.

It belongs to the cytochrome P450 family. The cofactor is heme.

The protein resides in the endoplasmic reticulum membrane. It is found in the microsome membrane. In terms of biological role, may be involved in the metabolism of insect hormones and in the breakdown of synthetic insecticides. The sequence is that of Cytochrome P450 4g1 (Cyp4g1) from Drosophila melanogaster (Fruit fly).